Reading from the N-terminus, the 43-residue chain is Protein PsbN (43 aa).

A helical transmembrane segment spans residues Ala4 to Tyr24.

It belongs to the PsbN family.

It is found in the plastid. It localises to the chloroplast thylakoid membrane. May play a role in photosystem I and II biogenesis. This chain is Protein PsbN, found in Trieres chinensis (Marine centric diatom).